The sequence spans 90 residues: Acylphosphatase (90 aa).

Residues 5-90 (SFVVHVWGQV…PPQKGGFHTN (86 aa)) form the Acylphosphatase-like domain. Catalysis depends on residues arginine 20 and asparagine 38.

The protein belongs to the acylphosphatase family.

It catalyses the reaction an acyl phosphate + H2O = a carboxylate + phosphate + H(+). The sequence is that of Acylphosphatase (acyP) from Aeromonas salmonicida (strain A449).